The following is a 95-amino-acid chain: DASH complex subunit DAD3 (95 aa).

Belongs to the DASH complex DAD3 family. As to quaternary structure, component of the DASH complex consisting of ASK1, DAD1, DAD2, DAD3, DAD4, DAM1, DUO1, HSK3, SPC19 and SPC34, with a stoichiometry of one copy of each subunit per complex. Multiple DASH complexes oligomerize to form a ring that encircles spindle microtubules and organizes the rod-like NDC80 complexes of the outer kinetochore. DASH complex oligomerization strengthens microtubule attachments. On cytoplasmic microtubules, DASH complexes appear to form patches instead of rings.

The protein resides in the chromosome. It is found in the centromere. It localises to the kinetochore. The protein localises to the cytoplasm. Its subcellular location is the cytoskeleton. The protein resides in the spindle. It is found in the nucleus. Component of the DASH complex that connects microtubules with kinetochores and couples microtubule depolymerisation to chromosome movement; it is involved in retrieving kinetochores to the spindle poles before their re-orientation on the spindle in early mitosis and allows microtubule depolymerization to pull chromosomes apart and resist detachment during anaphase. Kinetochores, consisting of a centromere-associated inner segment and a microtubule-contacting outer segment, play a crucial role in chromosome segregation by mediating the physical connection between centromeric DNA and microtubules. Kinetochores also serve as an input point for the spindle assembly checkpoint, which delays anaphase until all chromosomes have bioriented on the mitotic spindle. This chain is DASH complex subunit DAD3, found in Chaetomium thermophilum (strain DSM 1495 / CBS 144.50 / IMI 039719) (Thermochaetoides thermophila).